Consider the following 593-residue polypeptide: Calnexin (593 aa).

The N-terminal stretch at 1-20 (MEGKWLLCMLLVLGTTIVQA) is a signal peptide. The Lumenal segment spans residues 21–482 (HEGHDDDMID…QMIEAAEERP (462 aa)). Ca(2+) contacts are provided by serine 75 and aspartate 118. Residue lysine 138 is modified to N6-acetyllysine. Residues cysteine 161 and cysteine 195 are joined by a disulfide bond. An alpha-D-glucoside is bound by residues tyrosine 165, lysine 167, tyrosine 186, and aspartate 193. The disordered stretch occupies residues 261-346 (GNLLNDMTPP…AEKPEDWDED (86 aa)). The tract at residues 277–410 (IEDPEDQKPE…RKIPNPDFFE (134 aa)) is p domain (Extended arm). 5 repeat units span residues 279 to 290 (DPEDQKPEDWDE), 296 to 307 (DPDAVKPDDWNE), 315 to 326 (DEEATKPDGWLD), 334 to 345 (DPDAEKPEDWDE), and 349 to 359 (GEWEAPQIANP). 4 X approximate repeats stretches follow at residues 279-345 (DPED…DWDE) and 349-406 (GEWE…IPNP). Residues 282–320 (DQKPEDWDERPKIPDPDAVKPDDWNEDAPAKIPDEEATK) show a composition bias toward basic and acidic residues. Positions 324–346 (WLDDEPEYVPDPDAEKPEDWDED) are enriched in acidic residues. Residues 327-360 (DEPEYVPDPDAEKPEDWDEDMDGEWEAPQIANPK) form an interaction with PPIB region. Cysteine 361 and cysteine 367 are disulfide-bonded. 3 consecutive repeat copies span residues 368–378 (GVWQRPMIDNP), 382–392 (GKWKPPMIDNP), and 396–406 (GIWKPRKIPNP). Residue glutamate 426 coordinates an alpha-D-glucoside. A Ca(2+)-binding site is contributed by aspartate 437. The chain crosses the membrane as a helical span at residues 483 to 503 (WLWVVYVLTVALPVFLVILFC). S-palmitoyl cysteine attachment occurs at residues cysteine 503 and cysteine 504. Residues 504 to 593 (CSGKKQSSPV…SPRNRKPRRE (90 aa)) lie on the Cytoplasmic side of the membrane. The segment at 504-593 (CSGKKQSSPV…SPRNRKPRRE (90 aa)) is sufficient to mediate interaction with SGIP1. The interval 511–593 (SPVEYKKTDA…SPRNRKPRRE (83 aa)) is disordered. Residues 526 to 548 (KEEEEEKEEEKDKGDEEEEGEEK) show a composition bias toward acidic residues. Serine 555 carries the phosphoserine modification. Threonine 563 is modified (phosphothreonine). Phosphoserine; by MAPK3 is present on serine 565. A Phosphoserine modification is found at serine 584.

The protein belongs to the calreticulin family. As to quaternary structure, interacts with MAPK3/ERK1. Interacts with KCNH2. Associates with ribosomes. Interacts with SGIP1; involved in negative regulation of endocytosis. The palmitoylated form interacts with the ribosome-translocon complex component SSR1, promoting efficient folding of glycoproteins. Interacts with SERPINA2P/SERPINA2 and with the S and Z variants of SERPINA1. Interacts with PPIB. Interacts with ZNRF4. Interacts with SMIM22. Interacts with TMX2. Interacts with TMEM35A/NACHO and CHRNA7. Interacts with reticulophagy regulators RETREG2 and RETREG3. Interacts with DNM1L; may form part of a larger protein complex at the ER-mitochondrial interface during mitochondrial fission. Interacts with ADAM7. In terms of processing, phosphorylated at Ser-565 by MAPK3/ERK1. Phosphorylation by MAPK3/ERK1 increases its association with ribosomes. Post-translationally, palmitoylation by DHHC6 leads to the preferential localization to the perinuclear rough ER. It mediates the association of calnexin with the ribosome-translocon complex (RTC) which is required for efficient folding of glycosylated proteins. Ubiquitinated, leading to proteasomal degradation. Probably ubiquitinated by ZNRF4.

Its subcellular location is the endoplasmic reticulum membrane. It localises to the mitochondrion membrane. It is found in the melanosome membrane. Its function is as follows. Calcium-binding protein that interacts with newly synthesized monoglucosylated glycoproteins in the endoplasmic reticulum. It may act in assisting protein assembly and/or in the retention within the ER of unassembled protein subunits. It seems to play a major role in the quality control apparatus of the ER by the retention of incorrectly folded proteins. Associated with partial T-cell antigen receptor complexes that escape the ER of immature thymocytes, it may function as a signaling complex regulating thymocyte maturation. Additionally it may play a role in receptor-mediated endocytosis at the synapse. This chain is Calnexin (CANX), found in Canis lupus familiaris (Dog).